The sequence spans 119 residues: Large ribosomal subunit protein bL20c (119 aa).

This sequence belongs to the bacterial ribosomal protein bL20 family.

It is found in the plastid. The protein resides in the chloroplast. Binds directly to 23S ribosomal RNA and is necessary for the in vitro assembly process of the 50S ribosomal subunit. It is not involved in the protein synthesizing functions of that subunit. This chain is Large ribosomal subunit protein bL20c (rpl20), found in Oryza sativa (Rice).